We begin with the raw amino-acid sequence, 503 residues long: Glutamate--tRNA ligase (503 aa).

The 'HIGH' region signature appears at 15–25 (PSPTGHLHVGG). The short motif at 262 to 266 (KLSKR) is the 'KMSKS' region element. K265 is an ATP binding site.

This sequence belongs to the class-I aminoacyl-tRNA synthetase family. Glutamate--tRNA ligase type 1 subfamily. In terms of assembly, monomer.

The protein localises to the cytoplasm. The enzyme catalyses tRNA(Glu) + L-glutamate + ATP = L-glutamyl-tRNA(Glu) + AMP + diphosphate. Catalyzes the attachment of glutamate to tRNA(Glu) in a two-step reaction: glutamate is first activated by ATP to form Glu-AMP and then transferred to the acceptor end of tRNA(Glu). This is Glutamate--tRNA ligase from Chlorobium phaeobacteroides (strain BS1).